We begin with the raw amino-acid sequence, 274 residues long: ATP synthase subunit a (274 aa).

5 helical membrane-spanning segments follow: residues F40 to I60, I110 to F130, D149 to I169, I224 to W244, and A245 to V265.

It belongs to the ATPase A chain family. F-type ATPases have 2 components, CF(1) - the catalytic core - and CF(0) - the membrane proton channel. CF(1) has five subunits: alpha(3), beta(3), gamma(1), delta(1), epsilon(1). CF(0) has three main subunits: a(1), b(2) and c(9-12). The alpha and beta chains form an alternating ring which encloses part of the gamma chain. CF(1) is attached to CF(0) by a central stalk formed by the gamma and epsilon chains, while a peripheral stalk is formed by the delta and b chains.

The protein resides in the cell membrane. Its function is as follows. Key component of the proton channel; it plays a direct role in the translocation of protons across the membrane. This chain is ATP synthase subunit a, found in Buchnera aphidicola subsp. Baizongia pistaciae (strain Bp).